Here is a 262-residue protein sequence, read N- to C-terminus: Apolipoprotein A-I-2 (262 aa).

The first 18 residues, 1–18, serve as a signal peptide directing secretion; sequence MQFLALALTILLAAATQA. The tract at residues 32–63 is 3 X approximate tandem repeats; sequence VKVAMMEYMAQVKETAQRSIDHLDDTEYKEYK. 2 consecutive repeat copies span residues 64–85 and 87–107. Residues 64 to 262 are 10 X approximate tandem repeats; that stretch reads VQLSQSLDNL…YETISQAMKA (199 aa). A 3; half-length repeat occupies 108–118; it reads KDVEELRSQLE. A run of 5 repeats spans residues 119–140, 141–162, 163–184, 185–206, and 207–228. The stretch at 229–239 is one 9; half-length repeat; the sequence is PLTTDFKGQLG. Copy 10 of the repeat occupies 240 to 262; the sequence is PAAEQAKEKLMALYETISQAMKA.

Belongs to the apolipoprotein A1/A4/E family.

The protein localises to the secreted. Its function is as follows. Participates in the reverse transport of cholesterol from tissues to the liver for excretion by promoting cholesterol efflux from tissues and by acting as a cofactor for the lecithin cholesterol acyltransferase (LCAT). The chain is Apolipoprotein A-I-2 from Oncorhynchus mykiss (Rainbow trout).